The sequence spans 689 residues: Glycine--tRNA ligase beta subunit (689 aa).

This sequence belongs to the class-II aminoacyl-tRNA synthetase family. In terms of assembly, tetramer of two alpha and two beta subunits.

The protein resides in the cytoplasm. The enzyme catalyses tRNA(Gly) + glycine + ATP = glycyl-tRNA(Gly) + AMP + diphosphate. The polypeptide is Glycine--tRNA ligase beta subunit (Shigella dysenteriae serotype 1 (strain Sd197)).